We begin with the raw amino-acid sequence, 146 residues long: Small ribosomal subunit protein uS9z (146 aa).

This sequence belongs to the universal ribosomal protein uS9 family.

The polypeptide is Small ribosomal subunit protein uS9z (RPS16A) (Arabidopsis thaliana (Mouse-ear cress)).